Consider the following 257-residue polypeptide: Phosphonates import ATP-binding protein PhnC (257 aa).

The ABC transporter domain occupies 4-248; it reads IKFKNVSKVY…VFSKIYGRTI (245 aa). 37 to 44 provides a ligand contact to ATP; that stretch reads GLSGAGKS.

This sequence belongs to the ABC transporter superfamily. Phosphonates importer (TC 3.A.1.9.1) family. As to quaternary structure, the complex is composed of two ATP-binding proteins (PhnC), two transmembrane proteins (PhnE) and a solute-binding protein (PhnD).

The protein localises to the cell membrane. The enzyme catalyses phosphonate(out) + ATP + H2O = phosphonate(in) + ADP + phosphate + H(+). Part of the ABC transporter complex PhnCDE involved in phosphonates import. Responsible for energy coupling to the transport system. The chain is Phosphonates import ATP-binding protein PhnC from Staphylococcus aureus (strain MRSA252).